A 277-amino-acid chain; its full sequence is Alpha carbonic anhydrase 5 (277 aa).

An N-terminal signal peptide occupies residues 1 to 22; sequence MKIPSIGYVFFLIFISITIVSS. The Alpha-carbonic anhydrase domain maps to 33–269; that stretch reads TQFNYEKKGE…KNERPVALYI (237 aa). Cysteine 58 and cysteine 219 are disulfide-bonded. N-linked (GlcNAc...) asparagine glycosylation is present at asparagine 91. Catalysis depends on histidine 99, which acts as the Proton acceptor. Asparagine 117 carries N-linked (GlcNAc...) asparagine glycosylation. Histidine 127, histidine 129, and histidine 146 together coordinate Zn(2+). 215–216 lines the substrate pocket; it reads TT.

The protein belongs to the alpha-class carbonic anhydrase family. The cofactor is Zn(2+). Post-translationally, N-glycosylated.

It is found in the plastid. Its subcellular location is the chloroplast stroma. The catalysed reaction is hydrogencarbonate + H(+) = CO2 + H2O. Its function is as follows. Reversible hydration of carbon dioxide. This Arabidopsis thaliana (Mouse-ear cress) protein is Alpha carbonic anhydrase 5 (ACA5).